A 76-amino-acid chain; its full sequence is UPF0291 protein MW2494 (76 aa).

The protein belongs to the UPF0291 family.

The protein localises to the cytoplasm. This chain is UPF0291 protein MW2494, found in Staphylococcus aureus (strain MW2).